Reading from the N-terminus, the 98-residue chain is Large ribosomal subunit protein eL21 (98 aa).

The segment at 1–24 (MVKMSHGPRSGSRRKLTKSAEERK) is disordered.

It belongs to the eukaryotic ribosomal protein eL21 family.

In Thermoplasma acidophilum (strain ATCC 25905 / DSM 1728 / JCM 9062 / NBRC 15155 / AMRC-C165), this protein is Large ribosomal subunit protein eL21 (rpl21e).